A 262-amino-acid chain; its full sequence is Aminoglycoside 3'-phosphotransferase (262 aa).

Asp-187 acts as the Proton acceptor in catalysis.

It belongs to the aminoglycoside phosphotransferase family. As to quaternary structure, monomer.

The protein resides in the cytoplasm. The enzyme catalyses kanamycin A + ATP = kanamycin 3'-phosphate + ADP + H(+). Its function is as follows. Resistance to butirosin and structurally-related aminoglycosides, including kanamycin and amikacin. This chain is Aminoglycoside 3'-phosphotransferase, found in Niallia circulans (Bacillus circulans).